The primary structure comprises 125 residues: Scinderin (125 aa).

The residue at position 13 (Y13) is a Phosphotyrosine. Residues K23–A30 and R49–R57 contribute to the a 1,2-diacyl-sn-glycero-3-phospho-(1D-myo-inositol-4,5-bisphosphate) site. A Gelsolin-like 1 repeat occupies V59–L99.

This sequence belongs to the villin/gelsolin family.

It localises to the cytoplasm. Its subcellular location is the cytoskeleton. It is found in the cell projection. The protein localises to the podosome. Its function is as follows. Ca(2+)-dependent actin filament-severing protein that has a regulatory function in exocytosis by affecting the organization of the microfilament network underneath the plasma membrane. In vitro, also has barbed end capping and nucleating activities in the presence of Ca(2+). Severing activity is inhibited by phosphatidylinositol 4,5-bis-phosphate (PIP2). Required for megakaryocyte differentiation, maturation, polyploidization and apoptosis with the release of platelet-like particles. Plays a role in osteoclastogenesis (OCG) and actin cytoskeletal organization in osteoclasts. Regulates chondrocyte proliferation and differentiation. Inhibits cell proliferation and tumorigenesis. Signaling is mediated by MAPK, p38 and JNK pathways. The chain is Scinderin (SCIN) from Sus scrofa (Pig).